We begin with the raw amino-acid sequence, 279 residues long: 4-hydroxy-3-methylbut-2-enyl diphosphate reductase (279 aa).

Cys12 provides a ligand contact to [4Fe-4S] cluster. (2E)-4-hydroxy-3-methylbut-2-enyl diphosphate contacts are provided by His40 and His70. Dimethylallyl diphosphate is bound by residues His40 and His70. Isopentenyl diphosphate-binding residues include His40 and His70. Cys92 contacts [4Fe-4S] cluster. A (2E)-4-hydroxy-3-methylbut-2-enyl diphosphate-binding site is contributed by His119. His119 contributes to the dimethylallyl diphosphate binding site. An isopentenyl diphosphate-binding site is contributed by His119. Residue Glu121 is the Proton donor of the active site. Thr151 contacts (2E)-4-hydroxy-3-methylbut-2-enyl diphosphate. Residue Cys181 participates in [4Fe-4S] cluster binding. Ser209, Ser210, Asn211, and Ser251 together coordinate (2E)-4-hydroxy-3-methylbut-2-enyl diphosphate. Ser209, Ser210, Asn211, and Ser251 together coordinate dimethylallyl diphosphate. 4 residues coordinate isopentenyl diphosphate: Ser209, Ser210, Asn211, and Ser251.

The protein belongs to the IspH family. Requires [4Fe-4S] cluster as cofactor.

The catalysed reaction is isopentenyl diphosphate + 2 oxidized [2Fe-2S]-[ferredoxin] + H2O = (2E)-4-hydroxy-3-methylbut-2-enyl diphosphate + 2 reduced [2Fe-2S]-[ferredoxin] + 2 H(+). The enzyme catalyses dimethylallyl diphosphate + 2 oxidized [2Fe-2S]-[ferredoxin] + H2O = (2E)-4-hydroxy-3-methylbut-2-enyl diphosphate + 2 reduced [2Fe-2S]-[ferredoxin] + 2 H(+). It functions in the pathway isoprenoid biosynthesis; dimethylallyl diphosphate biosynthesis; dimethylallyl diphosphate from (2E)-4-hydroxy-3-methylbutenyl diphosphate: step 1/1. It participates in isoprenoid biosynthesis; isopentenyl diphosphate biosynthesis via DXP pathway; isopentenyl diphosphate from 1-deoxy-D-xylulose 5-phosphate: step 6/6. Catalyzes the conversion of 1-hydroxy-2-methyl-2-(E)-butenyl 4-diphosphate (HMBPP) into a mixture of isopentenyl diphosphate (IPP) and dimethylallyl diphosphate (DMAPP). Acts in the terminal step of the DOXP/MEP pathway for isoprenoid precursor biosynthesis. In Thermotoga neapolitana (strain ATCC 49049 / DSM 4359 / NBRC 107923 / NS-E), this protein is 4-hydroxy-3-methylbut-2-enyl diphosphate reductase.